Here is a 252-residue protein sequence, read N- to C-terminus: uncharacterized protein (252 aa).

The HTH deoR-type domain maps to Ala-3–Leu-58. Residues Val-20–Asp-39 constitute a DNA-binding region (H-T-H motif).

This is an uncharacterized protein from Escherichia coli (strain K12).